A 180-amino-acid polypeptide reads, in one-letter code: Bifunctional protein PyrR (180 aa).

The PRPP-binding motif lies at 101 to 113 (VILVDDVLYTGRT).

The protein belongs to the purine/pyrimidine phosphoribosyltransferase family. PyrR subfamily. As to quaternary structure, homodimer and homohexamer; in equilibrium.

The catalysed reaction is UMP + diphosphate = 5-phospho-alpha-D-ribose 1-diphosphate + uracil. In terms of biological role, regulates transcriptional attenuation of the pyrimidine nucleotide (pyr) operon by binding in a uridine-dependent manner to specific sites on pyr mRNA. This disrupts an antiterminator hairpin in the RNA and favors formation of a downstream transcription terminator, leading to a reduced expression of downstream genes. Functionally, also displays a weak uracil phosphoribosyltransferase activity which is not physiologically significant. In Bacillus cereus (strain ATCC 14579 / DSM 31 / CCUG 7414 / JCM 2152 / NBRC 15305 / NCIMB 9373 / NCTC 2599 / NRRL B-3711), this protein is Bifunctional protein PyrR.